A 363-amino-acid chain; its full sequence is S-methylmethionine--homocysteine S-methyltransferase BHMT2 (363 aa).

The Hcy-binding domain occupies 11 to 305 (KGILERLDSG…YHIRAIAEEL (295 aa)). Positions 208, 290, and 291 each coordinate Zn(2+). Serine 321 is subject to Phosphoserine.

Homotetramer. Zn(2+) is required as a cofactor. In terms of tissue distribution, expressed in fetal heart, lung, liver, kidney and eye.

It carries out the reaction S-methyl-L-methionine + L-homocysteine = 2 L-methionine + H(+). It functions in the pathway amino-acid biosynthesis; L-methionine biosynthesis via de novo pathway; L-methionine from L-homocysteine (BhmT route): step 1/1. In terms of biological role, involved in the regulation of homocysteine metabolism. Converts homocysteine to methionine using S-methylmethionine (SMM) as a methyl donor. The sequence is that of S-methylmethionine--homocysteine S-methyltransferase BHMT2 (Bhmt2) from Mus musculus (Mouse).